The chain runs to 280 residues: Mediator of RNA polymerase II transcription subunit 2 (280 aa).

The segment at 212-247 (GLQNTSGGNEKKNDPQINFNDTNAPPSAVNVPENGN) is disordered. The segment covering 226–236 (PQINFNDTNAP) has biased composition (polar residues).

The protein belongs to the Mediator complex subunit 2 family. Component of the Mediator complex.

Its subcellular location is the nucleus. Component of the Mediator complex, a coactivator involved in the regulated transcription of nearly all RNA polymerase II-dependent genes. Mediator functions as a bridge to convey information from gene-specific regulatory proteins to the basal RNA polymerase II transcription machinery. Mediator is recruited to promoters by direct interactions with regulatory proteins and serves as a scaffold for the assembly of a functional preinitiation complex with RNA polymerase II and the general transcription factors. This chain is Mediator of RNA polymerase II transcription subunit 2 (MED2), found in Kluyveromyces lactis (strain ATCC 8585 / CBS 2359 / DSM 70799 / NBRC 1267 / NRRL Y-1140 / WM37) (Yeast).